The following is a 106-amino-acid chain: Nucleoid-associated protein PD_1058 (106 aa).

This sequence belongs to the YbaB/EbfC family. Homodimer.

The protein localises to the cytoplasm. Its subcellular location is the nucleoid. In terms of biological role, binds to DNA and alters its conformation. May be involved in regulation of gene expression, nucleoid organization and DNA protection. This Xylella fastidiosa (strain Temecula1 / ATCC 700964) protein is Nucleoid-associated protein PD_1058.